The chain runs to 520 residues: Putative lipase ATG15 (520 aa).

Residues 1 to 14 (MLHKSPSRKRFASP) are Cytoplasmic-facing. The chain crosses the membrane as a helical; Signal-anchor for type II membrane protein span at residues 15-35 (LHLGCILTLTVLCLIAYYFAL). The Lumenal segment spans residues 36–520 (PDYLSVGKSS…WLGFCTKYEL (485 aa)). N-linked (GlcNAc...) asparagine glycosylation is found at asparagine 173, asparagine 202, and asparagine 208. Serine 332 acts as the Charge relay system in catalysis.

It belongs to the AB hydrolase superfamily. Lipase family. As to quaternary structure, binds to both phosphatidylinositol (PI) and phosphatidylinositol 3,5-bisphosphate (PIP2).

Its subcellular location is the endosome. It is found in the multivesicular body membrane. The protein resides in the prevacuolar compartment membrane. It carries out the reaction a triacylglycerol + H2O = a diacylglycerol + a fatty acid + H(+). Lipase which is essential for lysis of subvacuolar cytoplasm to vacuole targeted bodies and intravacuolar autophagic bodies. Involved in the lysis of intravacuolar multivesicular body (MVB) vesicles. The intravacuolar membrane disintegration by ATG15 is critical to life span extension. The polypeptide is Putative lipase ATG15 (ATG15) (Saccharomyces cerevisiae (strain YJM789) (Baker's yeast)).